The primary structure comprises 474 residues: 4-O-methyl-glucuronoyl methylesterase (474 aa).

Residues 1–17 (MFKPSFVALALVSYATA) form the signal peptide. Residues 19 to 55 (ASAPQWGQCGGIGWTGPTACPSGWACQQLNAYYSQCL) enclose the CBM1 domain. The disordered stretch occupies residues 61–91 (APARTTAAPPPPPATTAAPPPPTTSAPTGSS). Pro residues predominate over residues 68 to 84 (APPPPPATTAAPPPPTT). The N-linked (GlcNAc...) asparagine glycan is linked to N120. Positions 284–289 (GCSRDG) match the GXSYXG catalytic site motif motif. Disulfide bonds link C285/C421 and C317/C393. S286 functions as the Nucleophile in the catalytic mechanism. Substrate contacts are provided by K290, Q332, E340, and W384. Residue H420 is the Proton donor/acceptor of the active site.

It belongs to the carbohydrate esterase 15 (CE15) family. In terms of processing, N-glycosylated.

The protein localises to the secreted. The catalysed reaction is a 4-O-methyl-alpha-D-glucuronosyl ester derivative + H2O = 4-O-methyl-alpha-D-glucuronate derivative + an alcohol + H(+). Its function is as follows. Glucuronoyl esterase which may play a significant role in biomass degradation, as it is considered to disconnect hemicellulose from lignin through the hydrolysis of the ester bond between 4-O-methyl-D-glucuronic acid residues of glucuronoxylans and aromatic alcohols of lignin. The protein is 4-O-methyl-glucuronoyl methylesterase of Cerrena unicolor (Canker rot fungus).